The following is a 385-amino-acid chain: Succinate--CoA ligase [ADP-forming] subunit beta (385 aa).

One can recognise an ATP-grasp domain in the interval 9 to 244; sequence KALFRTFGVP…LDEEDPLEVE (236 aa). ATP-binding positions include lysine 46, 53–55, glutamate 99, glutamine 102, and glutamate 107; that span reads GRG. Mg(2+)-binding residues include asparagine 199 and aspartate 213. Substrate is bound by residues asparagine 264 and 321–323; that span reads GIL.

The protein belongs to the succinate/malate CoA ligase beta subunit family. As to quaternary structure, heterotetramer of two alpha and two beta subunits. The cofactor is Mg(2+).

It carries out the reaction succinate + ATP + CoA = succinyl-CoA + ADP + phosphate. It catalyses the reaction GTP + succinate + CoA = succinyl-CoA + GDP + phosphate. The protein operates within carbohydrate metabolism; tricarboxylic acid cycle; succinate from succinyl-CoA (ligase route): step 1/1. Its function is as follows. Succinyl-CoA synthetase functions in the citric acid cycle (TCA), coupling the hydrolysis of succinyl-CoA to the synthesis of either ATP or GTP and thus represents the only step of substrate-level phosphorylation in the TCA. The beta subunit provides nucleotide specificity of the enzyme and binds the substrate succinate, while the binding sites for coenzyme A and phosphate are found in the alpha subunit. This Desulforapulum autotrophicum (strain ATCC 43914 / DSM 3382 / VKM B-1955 / HRM2) (Desulfobacterium autotrophicum) protein is Succinate--CoA ligase [ADP-forming] subunit beta.